Here is a 281-residue protein sequence, read N- to C-terminus: Diaminopimelate epimerase (281 aa).

N14 and N65 together coordinate substrate. C74 acts as the Proton donor in catalysis. Residues 75-76 (GN), N165, N198, and 216-217 (ER) contribute to the substrate site. C225 functions as the Proton acceptor in the catalytic mechanism. 226-227 (GT) provides a ligand contact to substrate.

Belongs to the diaminopimelate epimerase family. As to quaternary structure, homodimer.

It is found in the cytoplasm. It catalyses the reaction (2S,6S)-2,6-diaminopimelate = meso-2,6-diaminopimelate. It participates in amino-acid biosynthesis; L-lysine biosynthesis via DAP pathway; DL-2,6-diaminopimelate from LL-2,6-diaminopimelate: step 1/1. Functionally, catalyzes the stereoinversion of LL-2,6-diaminopimelate (L,L-DAP) to meso-diaminopimelate (meso-DAP), a precursor of L-lysine and an essential component of the bacterial peptidoglycan. The polypeptide is Diaminopimelate epimerase (Leptospira borgpetersenii serovar Hardjo-bovis (strain JB197)).